The sequence spans 33 residues: Brevinin 2AV (33 aa).

Cys27 and Cys33 are joined by a disulfide.

In terms of tissue distribution, expressed by the skin glands.

It localises to the secreted. In terms of biological role, has antibacterial activity. In Rana arvalis (Moor frog), this protein is Brevinin 2AV.